We begin with the raw amino-acid sequence, 284 residues long: tRNA-cytidine(32) 2-sulfurtransferase (284 aa).

Positions 44-49 (SGGKDS) match the PP-loop motif motif. [4Fe-4S] cluster is bound by residues Cys119, Cys122, and Cys210.

It belongs to the TtcA family. Homodimer. Mg(2+) is required as a cofactor. The cofactor is [4Fe-4S] cluster.

Its subcellular location is the cytoplasm. It catalyses the reaction cytidine(32) in tRNA + S-sulfanyl-L-cysteinyl-[cysteine desulfurase] + AH2 + ATP = 2-thiocytidine(32) in tRNA + L-cysteinyl-[cysteine desulfurase] + A + AMP + diphosphate + H(+). The protein operates within tRNA modification. In terms of biological role, catalyzes the ATP-dependent 2-thiolation of cytidine in position 32 of tRNA, to form 2-thiocytidine (s(2)C32). The sulfur atoms are provided by the cysteine/cysteine desulfurase (IscS) system. In Chromohalobacter salexigens (strain ATCC BAA-138 / DSM 3043 / CIP 106854 / NCIMB 13768 / 1H11), this protein is tRNA-cytidine(32) 2-sulfurtransferase.